The chain runs to 179 residues: Large ribosomal subunit protein uL6 (179 aa).

The segment covering 154-169 (EPYKGKGVKYEHEQIR) has biased composition (basic and acidic residues). Positions 154-179 (EPYKGKGVKYEHEQIRRKAGKSGGKK) are disordered. Positions 170–179 (RKAGKSGGKK) are enriched in basic residues.

The protein belongs to the universal ribosomal protein uL6 family. In terms of assembly, part of the 50S ribosomal subunit.

Its function is as follows. This protein binds to the 23S rRNA, and is important in its secondary structure. It is located near the subunit interface in the base of the L7/L12 stalk, and near the tRNA binding site of the peptidyltransferase center. This is Large ribosomal subunit protein uL6 from Oleidesulfovibrio alaskensis (strain ATCC BAA-1058 / DSM 17464 / G20) (Desulfovibrio alaskensis).